Reading from the N-terminus, the 718-residue chain is Protein Hook homolog 3 (718 aa).

Met1 carries the N-acetylmethionine modification. Positions 1-164 are sufficient for interaction with microtubules; that stretch reads MFNVESVERV…QELMSKESPV (164 aa). Position 6 is a phosphoserine (Ser6). A Calponin-homology (CH) domain is found at 10-126; it reads VELCESLLTW…RMLQLILGCA (117 aa). Coiled-coil stretches lie at residues 168–433 and 462–663; these read HDAY…VQAQ and EIRE…MEEK. Phosphoserine is present on Ser238. The tract at residues 450–671 is sufficient for interaction with IIGP1; sequence SSDSLAAEIV…EKYIVSAWYN (222 aa). Positions 553–718 are required for association with Golgi; that stretch reads EKLHEANNEL…PGHVQPATAR (166 aa). The disordered stretch occupies residues 682 to 718; that stretch reads EDRLASTGSGQSFLARQRQATSTRRSYPGHVQPATAR. Positions 687–706 are enriched in polar residues; that stretch reads STGSGQSFLARQRQATSTRR. Phosphoserine is present on residues Ser693 and Ser707.

The protein belongs to the hook family. As to quaternary structure, self-associates. Component of the FTS/Hook/FHIP complex (FHF complex), composed of AKTIP/FTS, FHIP1B, and one or more members of the Hook family of proteins HOOK1, HOOK2, and HOOK3. May interact directly with AKTIP/FTS, HOOK1 and HOOK2. Associates with several subunits of the homotypic vesicular sorting complex (the HOPS complex) including VPS16 and VPS41; these interactions may be indirect. Interacts with IIGP1. Interacts with MSR1, and this association is stimulated by ligand binding to MSR1. Interacts with microtubules. Part of a tripartite complex with dynein and dynactin, acts an adapter linking the dynein motor complex and dynactin. Interacts with dynein intermediate chain and dynactin (DCTN1). Interacts with CCDC181. Interacts with LRGUK. (Microbial infection) Interacts with Salmonella typhimurium spiC. Expressed in brain, cerebellum, heart, intestine, kidney, liver, lung, skeletal muscle, spleen and stomach (at protein level).

The protein resides in the cytoplasm. It is found in the cytoskeleton. Its subcellular location is the golgi apparatus. In terms of biological role, acts as an adapter protein linking the dynein motor complex to various cargos and converts dynein from a non-processive to a highly processive motor in the presence of dynactin. Facilitates the interaction between dynein and dynactin and activates dynein processivity (the ability to move along a microtubule for a long distance without falling off the track). Predominantly recruits 2 dyneins, which increases both the force and speed of the microtubule motor. Component of the FTS/Hook/FHIP complex (FHF complex). The FHF complex may function to promote vesicle trafficking and/or fusion via the homotypic vesicular protein sorting complex (the HOPS complex). May regulate clearance of endocytosed receptors such as MSR1. Participates in defining the architecture and localization of the Golgi complex. FHF complex promotes the distribution of AP-4 complex to the perinuclear area of the cell. (Microbial infection) Serves as a target for the spiC protein from Salmonella typhimurium, which inactivates it, leading to a strong alteration in cellular trafficking. The sequence is that of Protein Hook homolog 3 (Hook3) from Mus musculus (Mouse).